The sequence spans 184 residues: Translation initiation factor IF-3 (184 aa).

Belongs to the IF-3 family. Monomer.

Its subcellular location is the cytoplasm. Its function is as follows. IF-3 binds to the 30S ribosomal subunit and shifts the equilibrium between 70S ribosomes and their 50S and 30S subunits in favor of the free subunits, thus enhancing the availability of 30S subunits on which protein synthesis initiation begins. The polypeptide is Translation initiation factor IF-3 (Mycoplasma genitalium (strain ATCC 33530 / DSM 19775 / NCTC 10195 / G37) (Mycoplasmoides genitalium)).